A 380-amino-acid polypeptide reads, in one-letter code: Cytochrome b (380 aa).

4 helical membrane-spanning segments follow: residues 33-53, 77-98, 113-133, and 178-198; these read SGSL…FLAM, WLIR…YLHV, WNIG…GYVL, and FFAF…IHLL. Heme b-binding residues include His-83 and His-97. Residues His-182 and His-196 each contribute to the heme b site. His-201 serves as a coordination point for a ubiquinone. The next 4 membrane-spanning stretches (helical) occupy residues 226-246, 288-308, 320-340, and 347-367; these read YKDL…ALFS, LGGV…PILH, LSQI…WIGG, and FVLI…IALP.

Belongs to the cytochrome b family. As to quaternary structure, the cytochrome bc1 complex contains 3 respiratory subunits (MT-CYB, CYC1 and UQCRFS1), 2 core proteins (UQCRC1 and UQCRC2) and probably 6 low-molecular weight proteins. It depends on heme b as a cofactor.

It is found in the mitochondrion inner membrane. Component of the ubiquinol-cytochrome c reductase complex (complex III or cytochrome b-c1 complex) that is part of the mitochondrial respiratory chain. The b-c1 complex mediates electron transfer from ubiquinol to cytochrome c. Contributes to the generation of a proton gradient across the mitochondrial membrane that is then used for ATP synthesis. This Polyodon spathula (North American paddlefish) protein is Cytochrome b (mt-cyb).